A 313-amino-acid chain; its full sequence is Short-chain dehydrogenase/reductase family 9C member 7 (313 aa).

Residue 29-53 participates in NADP(+) binding; the sequence is FITGCDSGFGNLLARQLVDRGMRVL. S160 contributes to the substrate binding site. The Proton acceptor role is filled by Y172. S185 carries the post-translational modification Phosphoserine.

It belongs to the short-chain dehydrogenases/reductases (SDR) family.

Its subcellular location is the cytoplasm. The enzyme catalyses a N-[omega-(9R,10R)-epoxy-(13R)-hydroxy-(11E)-octadecenoyloxy]acyl-beta-D-glucosyl-(1&lt;-&gt;1)-sphing-4E-enine + NAD(+) = a N-[omega-(9R,10R)-epoxy-13-oxo-(11E)-octadecenoyloxy]acyl-beta-D-glucosyl-(1&lt;-&gt;1)-sphing-4E-enine + NADH + H(+). The catalysed reaction is a N-[omega-(9R,10R)-epoxy-(13R)-hydroxy-(11E)-octadecenoyloxy]-acylsphing-4E-enine + NAD(+) = a N-[omega-(9R,10R)-epoxy-13-oxo-(11E)-octadecenoyloxy]-acylsphing-4E-enine + NADH + H(+). Functionally, plays a crucial role in the formation of the epidermal permeability barrier. Catalyzes the NAD+-dependent dehydrogenation of the linoleate 9,10-trans-epoxy-11E-13-alcohol esterified in omega-O-acylceramides (such as in N-[omega-(9R,10R)-epoxy-(13R)-hydroxy-(11E)-octadecenoyloxy]-acylsphing-4E-enine) to the corresponding 13-ketone, the reactive moiety required for binding of epidermal ceramides to proteins. Displays weak conversion of all-trans-retinal to all-trans-retinol in the presence of NADH. Has apparently no steroid dehydrogenase activity. This Bos taurus (Bovine) protein is Short-chain dehydrogenase/reductase family 9C member 7 (SDR9C7).